We begin with the raw amino-acid sequence, 289 residues long: Ribosomal protein L11 methyltransferase (289 aa).

T135, G156, D179, and N225 together coordinate S-adenosyl-L-methionine.

Belongs to the methyltransferase superfamily. PrmA family.

Its subcellular location is the cytoplasm. The catalysed reaction is L-lysyl-[protein] + 3 S-adenosyl-L-methionine = N(6),N(6),N(6)-trimethyl-L-lysyl-[protein] + 3 S-adenosyl-L-homocysteine + 3 H(+). Methylates ribosomal protein L11. The chain is Ribosomal protein L11 methyltransferase from Chlorobaculum tepidum (strain ATCC 49652 / DSM 12025 / NBRC 103806 / TLS) (Chlorobium tepidum).